Reading from the N-terminus, the 1367-residue chain is MYNSQQQNIIKINKQDTDGRLQLFIVDAKRTLRNSSIELESSQIYIDVTKRLIDIASLFCKQEEIQYESFAEELLSILNSTQFKILGKCRELVIKLLTIIAKYARVNQLLGIESKDRSPSSSINKNNGFDQLYDFELNRIDENNNNNNNNNNNNNNNNNKNKTISPTHQTIQATIPSPKLQPFLDHDDKDDKEIIDIVSNKDKDQLNGVDDVDLSNTSGISCKEIFEKNPINFQKSHYRCLSYSPKLLEQQLQQKLVNQQIKLKNGKPSPIKRPSPPLPPPQQQQKEQQKEQKEQQKEQQKEQQKEQQKEQEQKQQEPQKYVKFEIQKSPPSNLLPPLPISSSNISNEISKQQQQQQQQQQQQQQQQQQQQQQQQQQQQQQIAQPPPPQSITSPQTISANNNILTTPLSSQPTQSLETPSTIKPPLLSRRVSDIIYSKNETNLNIKEPIHSKDIIPTPLETNVGGGGGEITKKVVGSEENLLSSSSEEETLSTSEEHDEYTTSTSGEDEEEDEDDDNIYNTNHYEISERKLKNKRPFKKTHVHHSLSANSPLSRKPYESPVFLLDPRLNDLKTSSDEYILKRPLVRSKSFSPNKEEEQIKKEPYRKLARSFSEIPSVKLIEDHNDDSQMAMCRICEEPIHSSLLEDHSKICAMANEEDMKAMNVDDHLRAVAKILLTRSNDIPHEKRKMIIELREIALFAVENGIKENLKMIHIMNDIIKNFDPKDDNRELAIKIQSLISDKVNALKRADDVINSSPRIFRTNSPRILKSPREEELSQTPLGGRLRSDSDPVHQTQIEYKPKGVPTISDFEFIKPITKGGYGKVFLAKKIRTGDIYAIKRLKKSDMIKKNQLDHVKVERNILAYTSNPFVVKMYYSFQTKEYYYLVMEYLQGGDCFSLLQMLGSMDENMAKMIIAETVLALEYLHSHGIVHRDVKPDNLLIDKKGHIKLTDFGLSKVGLLDRQTVVPPSYFSPTLSGKNNQSSSSSSVSNIGGSNTIGSNISSTNNNNNNNNTTGATMVGGHVINTETPIPSNTAIPAKKEKKLLSLAQSKSLFSASSSPSIPSLNLLNSDKPISPMMMGVKGFIPPPPINQQPISNIPTTTTTTTTTTTGQQSQQQSQQQQQTTPPLPPHNIHRKLSCVGTPDYLAPEILLGIGHGASADWFSLGVILYEFLCGVSPFNGSSVQETFQNILQRNISWPEDMSPEARDLIDKLLALDPRQRLGFNGAEEIKSHPFFKSINWKTILTQEPYFKPKIENLQDTSYFDPRKEIYKVSDDFAESCKPFVQNQNQNKESSTILTTSPPSTSSTTATATATTSNLDSITINQNTNANFDDFLYVNFQSLLELNKNYLAEAKPFNSNHRRRNST.

Disordered regions lie at residues 140–164 (IDENNNNNNNNNNNNNNNNNKNKTI), 264–429 (KNGK…LLSR), 456–556 (PTPL…SRKP), and 771–792 (PREEELSQTPLGGRLRSDSDPV). A compositionally biased stretch (low complexity) spans 143–162 (NNNNNNNNNNNNNNNNNKNK). The segment covering 271 to 282 (IKRPSPPLPPPQ) has biased composition (pro residues). Residues 287–326 (EQQKEQKEQQKEQQKEQQKEQQKEQEQKQQEPQKYVKFEI) show a composition bias toward basic and acidic residues. A compositionally biased stretch (low complexity) spans 340-381 (ISSSNISNEISKQQQQQQQQQQQQQQQQQQQQQQQQQQQQQQ). Residues 399 to 421 (ANNNILTTPLSSQPTQSLETPST) show a composition bias toward polar residues. The segment covering 506–517 (GEDEEEDEDDDN) has biased composition (acidic residues). Over residues 531–544 (LKNKRPFKKTHVHH) the composition is skewed to basic residues. In terms of domain architecture, Protein kinase spans 810-1236 (FEFIKPITKG…AEEIKSHPFF (427 aa)). Residues 816-824 (ITKGGYGKV) and lysine 839 contribute to the ATP site. The active-site Proton acceptor is the aspartate 933. 3 disordered regions span residues 971–1034 (FSPT…PSNT), 1084–1134 (FIPP…HNIH), and 1288–1312 (QNQNKESSTILTTSPPSTSSTTATA). Residues 979-1015 (NNQSSSSSSVSNIGGSNTIGSNISSTNNNNNNNNTTG) are compositionally biased toward low complexity. The segment covering 1025 to 1034 (NTETPIPSNT) has biased composition (polar residues). 2 stretches are compositionally biased toward low complexity: residues 1092 to 1125 (QQPISNIPTTTTTTTTTTTGQQSQQQSQQQQQTT) and 1294 to 1312 (SSTILTTSPPSTSSTTATA). Positions 1237-1347 (KSINWKTILT…VNFQSLLELN (111 aa)) constitute an AGC-kinase C-terminal domain.

The protein belongs to the protein kinase superfamily. AGC Ser/Thr protein kinase family.

It catalyses the reaction L-seryl-[protein] + ATP = O-phospho-L-seryl-[protein] + ADP + H(+). The catalysed reaction is L-threonyl-[protein] + ATP = O-phospho-L-threonyl-[protein] + ADP + H(+). The polypeptide is Probable serine/threonine-protein kinase pkgA (pkgA) (Dictyostelium discoideum (Social amoeba)).